The chain runs to 332 residues: DNA-directed RNA polymerase subunit alpha (332 aa).

The alpha N-terminal domain (alpha-NTD) stretch occupies residues 1 to 230; it reads MKKITTSAYM…KQMSIFNNVL (230 aa). The tract at residues 246-332 is alpha C-terminal domain (alpha-CTD); sequence EHSKLLESVE…LRKKISELKS (87 aa).

The protein belongs to the RNA polymerase alpha chain family. Homodimer. The RNAP catalytic core consists of 2 alpha, 1 beta, 1 beta' and 1 omega subunit. When a sigma factor is associated with the core the holoenzyme is formed, which can initiate transcription.

The catalysed reaction is RNA(n) + a ribonucleoside 5'-triphosphate = RNA(n+1) + diphosphate. Functionally, DNA-dependent RNA polymerase catalyzes the transcription of DNA into RNA using the four ribonucleoside triphosphates as substrates. The sequence is that of DNA-directed RNA polymerase subunit alpha from Campylobacter fetus subsp. fetus (strain 82-40).